A 640-amino-acid chain; its full sequence is Chaperone protein DnaK (640 aa).

The residue at position 196 (Thr-196) is a Phosphothreonine; by autocatalysis. Disordered stretches follow at residues 487 to 526 (GKEQSIKIESSSKLTDAEISKMKEDAKEHAAEDQKRKEEI) and 593 to 640 (SHLY…GNDK). The span at 501–526 (TDAEISKMKEDAKEHAAEDQKRKEEI) shows a compositional bias: basic and acidic residues. Residues 595-613 (LYQSQGPESSQPETAAQSD) are compositionally biased toward polar residues. Over residues 630-640 (AEYEVIDGNDK) the composition is skewed to acidic residues.

Belongs to the heat shock protein 70 family.

Acts as a chaperone. This Pelodictyon phaeoclathratiforme (strain DSM 5477 / BU-1) protein is Chaperone protein DnaK.